Consider the following 883-residue polypeptide: Aryl hydrocarbon receptor (883 aa).

Positions 1 to 9 (MSSGANITY) are excised as a propeptide. The segment at 1 to 38 (MSSGANITYASRKRRKPVQKTVKPIPAEGIKSNPSKRH) is disordered. Short sequence motifs (nuclear localization signal) lie at residues 12 to 15 (RKRR) and 36 to 41 (KRHRDR). A bHLH domain is found at 26 to 79 (PAEGIKSNPSKRHRDRLNTELDRLASLLPFPQDVINKLDKLSVLRLSVSYLRAK). Positions 37–65 (RHRDRLNTELDRLASLLPFPQDVINKLDK) are DNA-binding. Required for maintaining the overall integrity of the AHR:ARNT heterodimer and its transcriptional activity regions lie at residues 49 to 81 (LASL…AKSF), 116 to 124 (LLQALNGFV), and 260 to 262 (FAI). The short motif at 63–71 (LDKLSVLRL) is the Nuclear export signal element. A PAS 1 domain is found at 111–175 (QEGEFLLQAL…AEFQRQLHWA (65 aa)). Residues 266–336 (LQPPSILEIR…CAESHIRMIK (71 aa)) enclose the PAS 2 domain. The PAC domain maps to 342–383 (MTVFRLLAKHSRWRWVQSNARLIYRNGRPDYIIATQRPLTDE). The interval 421-449 (LPIRTKSNTSRKDWAPQSTPSKDSFHPSS) is disordered. The span at 436 to 449 (PQSTPSKDSFHPSS) shows a compositional bias: polar residues.

In terms of assembly, homodimer. Heterodimer; efficient DNA binding requires dimerization with another bHLH protein. Interacts with ARNT; the heterodimer ARNT:AHR binds to core DNA sequence 5'-TGCGTG-3' within the dioxin response element (DRE) of target gene promoters and activates their transcription. Binds MYBBP1A. Interacts with coactivators including SRC-1, RIP140 and NOCA7, and with the corepressor SMRT. Interacts with NEDD8 and IVNS1ABP. Interacts with BMAL1. Interacts with HSP90AB1. Interacts with TIPARP; leading to mono-ADP-ribosylation of AHR and subsequent inhibition of AHR. Post-translationally, mono-ADP-ribosylated, leading to inhibit transcription activator activity of AHR.

The protein localises to the cytoplasm. Its subcellular location is the nucleus. Ligand-activated transcription factor that enables cells to adapt to changing conditions by sensing compounds from the environment, diet, microbiome and cellular metabolism, and which plays important roles in development, immunity and cancer. Upon ligand binding, translocates into the nucleus, where it heterodimerizes with ARNT and induces transcription by binding to xenobiotic response elements (XRE). Regulates a variety of biological processes, including angiogenesis, hematopoiesis, drug and lipid metabolism, cell motility and immune modulation. Xenobiotics can act as ligands: upon xenobiotic-binding, activates the expression of multiple phase I and II xenobiotic chemical metabolizing enzyme genes (such as the CYP1A1 gene). Mediates biochemical and toxic effects of halogenated aromatic hydrocarbons. Next to xenobiotics, natural ligands derived from plants, microbiota, and endogenous metabolism are potent AHR agonists. Tryptophan (Trp) derivatives constitute an important class of endogenous AHR ligands. Acts as a negative regulator of anti-tumor immunity: indoles and kynurenic acid generated by Trp catabolism act as ligand and activate AHR, thereby promoting AHR-driven cancer cell motility and suppressing adaptive immunity. Regulates the circadian clock by inhibiting the basal and circadian expression of the core circadian component PER1. Inhibits PER1 by repressing the CLOCK-BMAL1 heterodimer mediated transcriptional activation of PER1. The heterodimer ARNT:AHR binds to core DNA sequence 5'-TGCGTG-3' within the dioxin response element (DRE) of target gene promoters and activates their transcription. The chain is Aryl hydrocarbon receptor (Ahr) from Mus musculus molossinus (Japanese house mouse).